Here is a 275-residue protein sequence, read N- to C-terminus: Lectin (275 aa).

The N-terminal stretch at 1–30 is a signal peptide; the sequence is MASLQTQMISFYLIFLSILLTTIFFFKVNS. 2 residues coordinate D-glucose: aspartate 111 and glycine 129. Glutamate 149 and aspartate 151 together coordinate Mn(2+). Residues aspartate 151, phenylalanine 153, asparagine 155, and aspartate 159 each contribute to the Ca(2+) site. Residues aspartate 159 and histidine 166 each coordinate Mn(2+). A propeptide spanning residues 211 to 217 is cleaved from the precursor; the sequence is NSLEEEN. Residues glycine 246 and alanine 247 each coordinate D-glucose. The propeptide occupies 270-275; sequence KQAADA.

It belongs to the leguminous lectin family. In terms of assembly, heterotetramer of two alpha and two beta chains. In terms of processing, the mature form consists of two chains, alpha and beta, produced by cleavage of the immature protein. These remain cleaved, yet fold together to form one subunit.

D-mannose specific lectin. The protein is Lectin of Lens culinaris subsp. culinaris (Cultivated lentil).